The sequence spans 304 residues: Large ribosomal subunit protein uL18y (304 aa).

This sequence belongs to the universal ribosomal protein uL18 family. In terms of assembly, component of the large ribosomal subunit (LSU).

It is found in the cytoplasm. It localises to the nucleus. Component of the ribosome, a large ribonucleoprotein complex responsible for the synthesis of proteins in the cell. The small ribosomal subunit (SSU) binds messenger RNAs (mRNAs) and translates the encoded message by selecting cognate aminoacyl-transfer RNA (tRNA) molecules. The large subunit (LSU) contains the ribosomal catalytic site termed the peptidyl transferase center (PTC), which catalyzes the formation of peptide bonds, thereby polymerizing the amino acids delivered by tRNAs into a polypeptide chain. The nascent polypeptides leave the ribosome through a tunnel in the LSU and interact with protein factors that function in enzymatic processing, targeting, and the membrane insertion of nascent chains at the exit of the ribosomal tunnel. This is Large ribosomal subunit protein uL18y (RPL5B) from Oryza sativa subsp. japonica (Rice).